Consider the following 295-residue polypeptide: MAQTIDIANPTRTQAILNEYGLRAKKKFGQNFLTDLNVLHNIVEAAEITAEDYVIEIGPGIGALTEQLARSAKKVLAFEIDSQMVEVLADTLKPYDNVKVIENDVLKVDLAKVISEEFGDNAHVKIVANLPYYITTPILIQLLRSNINWDNIVVMMQREVADRLNAAVGTKSYGVLTLTIQYFAQATLAIKVPASSFNPSPNVDSAVVKLTPLKPTTVVENVGKLFGVIKGSFSHRRKSLWNNMLQTYGKDAGTKEQLTVALKSAQIDPAIRAERLNLEQFTQLYLALRDQNLTQ.

S-adenosyl-L-methionine is bound by residues asparagine 31, leucine 33, glycine 58, glutamate 79, aspartate 104, and asparagine 129.

The protein belongs to the class I-like SAM-binding methyltransferase superfamily. rRNA adenine N(6)-methyltransferase family. RsmA subfamily.

Its subcellular location is the cytoplasm. The enzyme catalyses adenosine(1518)/adenosine(1519) in 16S rRNA + 4 S-adenosyl-L-methionine = N(6)-dimethyladenosine(1518)/N(6)-dimethyladenosine(1519) in 16S rRNA + 4 S-adenosyl-L-homocysteine + 4 H(+). Its function is as follows. Specifically dimethylates two adjacent adenosines (A1518 and A1519) in the loop of a conserved hairpin near the 3'-end of 16S rRNA in the 30S particle. May play a critical role in biogenesis of 30S subunits. The sequence is that of Ribosomal RNA small subunit methyltransferase A from Leuconostoc mesenteroides subsp. mesenteroides (strain ATCC 8293 / DSM 20343 / BCRC 11652 / CCM 1803 / JCM 6124 / NCDO 523 / NBRC 100496 / NCIMB 8023 / NCTC 12954 / NRRL B-1118 / 37Y).